Consider the following 904-residue polypeptide: Nitrate reductase [NADH] 2 (904 aa).

Composition is skewed to polar residues over residues Met-1–Phe-10 and Pro-35–Ile-50. Residues Met-1–Glu-65 are disordered. A compositionally biased stretch (acidic residues) spans Ser-56–Glu-65. Cys-183 is a Mo-molybdopterin binding site. The Cytochrome b5 heme-binding domain maps to Ser-531 to Ile-606. Residues His-566 and His-589 each contribute to the heme site. The FAD-binding FR-type domain maps to Arg-647 to Gln-759. FAD is bound by residues Arg-699–Thr-702, Val-716–Tyr-720, Phe-721, Phe-728, Gln-733–Ser-735, and Thr-786.

It belongs to the nitrate reductase family. Homodimer. FAD serves as cofactor. It depends on heme as a cofactor. Mo-molybdopterin is required as a cofactor.

It catalyses the reaction nitrite + NAD(+) + H2O = nitrate + NADH + H(+). Regulated by the nitrogen source and controlled by the circadian rhythm. In terms of biological role, nitrate reductase is a key enzyme involved in the first step of nitrate assimilation in plants, fungi and bacteria. In Nicotiana tabacum (Common tobacco), this protein is Nitrate reductase [NADH] 2 (NIA2).